The following is a 177-amino-acid chain: Large ribosomal subunit protein uL6 (177 aa).

Belongs to the universal ribosomal protein uL6 family. As to quaternary structure, part of the 50S ribosomal subunit.

Functionally, this protein binds to the 23S rRNA, and is important in its secondary structure. It is located near the subunit interface in the base of the L7/L12 stalk, and near the tRNA binding site of the peptidyltransferase center. This is Large ribosomal subunit protein uL6 from Variovorax paradoxus (strain S110).